Reading from the N-terminus, the 593-residue chain is Aspartate--tRNA ligase (593 aa).

An L-aspartate-binding site is contributed by E180. The segment at 204 to 207 is aspartate; it reads QIFK. R226 contributes to the L-aspartate binding site. Residues 226 to 228 and Q235 each bind ATP; that span reads RDE. An L-aspartate-binding site is contributed by H453. E487 is an ATP binding site. R494 serves as a coordination point for L-aspartate. 539–542 lines the ATP pocket; it reads GLDR.

The protein belongs to the class-II aminoacyl-tRNA synthetase family. Type 1 subfamily. In terms of assembly, homodimer.

It is found in the cytoplasm. The enzyme catalyses tRNA(Asp) + L-aspartate + ATP = L-aspartyl-tRNA(Asp) + AMP + diphosphate. Functionally, catalyzes the attachment of L-aspartate to tRNA(Asp) in a two-step reaction: L-aspartate is first activated by ATP to form Asp-AMP and then transferred to the acceptor end of tRNA(Asp). The sequence is that of Aspartate--tRNA ligase from Clostridium botulinum (strain ATCC 19397 / Type A).